The sequence spans 782 residues: Polyribonucleotide nucleotidyltransferase (782 aa).

Residues Asp-514 and Asp-520 each contribute to the Mg(2+) site. The KH domain occupies Pro-580–Ile-639. One can recognise an S1 motif domain in the interval Gly-651–Val-723. Positions Ala-734–Gln-753 are enriched in low complexity. Positions Ala-734–His-782 are disordered. The segment covering Arg-766–Gln-776 has biased composition (basic and acidic residues).

The protein belongs to the polyribonucleotide nucleotidyltransferase family. It depends on Mg(2+) as a cofactor.

The protein localises to the cytoplasm. It catalyses the reaction RNA(n+1) + phosphate = RNA(n) + a ribonucleoside 5'-diphosphate. Its function is as follows. Involved in mRNA degradation. Catalyzes the phosphorolysis of single-stranded polyribonucleotides processively in the 3'- to 5'-direction. In Acidothermus cellulolyticus (strain ATCC 43068 / DSM 8971 / 11B), this protein is Polyribonucleotide nucleotidyltransferase.